Consider the following 241-residue polypeptide: Lipoprotein MxiJ (241 aa).

Positions 1 to 17 (MIRYKGFILFLLLMLIG) are cleaved as a signal peptide. Cys18 carries the N-palmitoyl cysteine lipid modification. Cys18 is lipidated: S-diacylglycerol cysteine.

Belongs to the YscJ lipoprotein family.

Its subcellular location is the cell outer membrane. Its function is as follows. Involved in the secretion of the Ipa antigens. This chain is Lipoprotein MxiJ (mxiJ), found in Shigella sonnei.